Consider the following 258-residue polypeptide: Imidazole glycerol phosphate synthase subunit HisF (258 aa).

Catalysis depends on residues Asp-11 and Asp-130.

Belongs to the HisA/HisF family. As to quaternary structure, heterodimer of HisH and HisF.

Its subcellular location is the cytoplasm. The catalysed reaction is 5-[(5-phospho-1-deoxy-D-ribulos-1-ylimino)methylamino]-1-(5-phospho-beta-D-ribosyl)imidazole-4-carboxamide + L-glutamine = D-erythro-1-(imidazol-4-yl)glycerol 3-phosphate + 5-amino-1-(5-phospho-beta-D-ribosyl)imidazole-4-carboxamide + L-glutamate + H(+). Its pathway is amino-acid biosynthesis; L-histidine biosynthesis; L-histidine from 5-phospho-alpha-D-ribose 1-diphosphate: step 5/9. Functionally, IGPS catalyzes the conversion of PRFAR and glutamine to IGP, AICAR and glutamate. The HisF subunit catalyzes the cyclization activity that produces IGP and AICAR from PRFAR using the ammonia provided by the HisH subunit. In Methylobacterium nodulans (strain LMG 21967 / CNCM I-2342 / ORS 2060), this protein is Imidazole glycerol phosphate synthase subunit HisF.